The following is a 385-amino-acid chain: Cell division protein FtsZ (385 aa).

GTP is bound by residues 37-41 (GGGSN), 125-127 (GTG), E156, K160, and D204.

The protein belongs to the FtsZ family. As to quaternary structure, homodimer. Polymerizes to form a dynamic ring structure in a strictly GTP-dependent manner. Interacts directly with several other division proteins.

The protein localises to the cytoplasm. Its function is as follows. Essential cell division protein that forms a contractile ring structure (Z ring) at the future cell division site. The regulation of the ring assembly controls the timing and the location of cell division. One of the functions of the FtsZ ring is to recruit other cell division proteins to the septum to produce a new cell wall between the dividing cells. Binds GTP and shows GTPase activity. The sequence is that of Cell division protein FtsZ from Helicobacter pylori (strain J99 / ATCC 700824) (Campylobacter pylori J99).